The chain runs to 505 residues: Lysine--tRNA ligase (505 aa).

The Mg(2+) site is built by Glu-415 and Glu-422.

It belongs to the class-II aminoacyl-tRNA synthetase family. In terms of assembly, homodimer. Mg(2+) is required as a cofactor.

It localises to the cytoplasm. It carries out the reaction tRNA(Lys) + L-lysine + ATP = L-lysyl-tRNA(Lys) + AMP + diphosphate. This Escherichia coli O157:H7 protein is Lysine--tRNA ligase.